Consider the following 192-residue polypeptide: Fe/S biogenesis protein NfuA (192 aa).

Positions 149 and 152 each coordinate [4Fe-4S] cluster.

The protein belongs to the NfuA family. As to quaternary structure, homodimer. [4Fe-4S] cluster is required as a cofactor.

Its function is as follows. Involved in iron-sulfur cluster biogenesis. Binds a 4Fe-4S cluster, can transfer this cluster to apoproteins, and thereby intervenes in the maturation of Fe/S proteins. Could also act as a scaffold/chaperone for damaged Fe/S proteins. The protein is Fe/S biogenesis protein NfuA of Shewanella sediminis (strain HAW-EB3).